Consider the following 503-residue polypeptide: 4-trimethylaminobutyraldehyde dehydrogenase (503 aa).

Residues Lys-189 and 241-245 (GSVPT) each bind NAD(+). Residue Glu-263 is the Proton acceptor of the active site. Catalysis depends on Cys-297, which acts as the Nucleophile. Position 400 (Glu-400) interacts with NAD(+).

This sequence belongs to the aldehyde dehydrogenase family. As to quaternary structure, homotetramer.

The protein localises to the cytoplasm. It is found in the cytosol. It catalyses the reaction 4-(trimethylamino)butanal + NAD(+) + H2O = 4-(trimethylamino)butanoate + NADH + 2 H(+). The enzyme catalyses an aldehyde + NAD(+) + H2O = a carboxylate + NADH + 2 H(+). It functions in the pathway amine and polyamine biosynthesis; carnitine biosynthesis. Its function is as follows. Converts gamma-trimethylaminobutyraldehyde into gamma-butyrobetaine with high efficiency (in vitro). Can catalyze the irreversible oxidation of a broad range of aldehydes to the corresponding acids in an NAD-dependent reaction, but with low efficiency. This Gadus morhua subsp. callarias (Baltic cod) protein is 4-trimethylaminobutyraldehyde dehydrogenase (aldh9A1).